The primary structure comprises 300 residues: 33 kDa chaperonin (300 aa).

Intrachain disulfides connect Cys-247–Cys-249 and Cys-280–Cys-283.

It belongs to the HSP33 family. Under oxidizing conditions two disulfide bonds are formed involving the reactive cysteines. Under reducing conditions zinc is bound to the reactive cysteines and the protein is inactive.

It is found in the cytoplasm. Redox regulated molecular chaperone. Protects both thermally unfolding and oxidatively damaged proteins from irreversible aggregation. Plays an important role in the bacterial defense system toward oxidative stress. The sequence is that of 33 kDa chaperonin from Prochlorococcus marinus (strain MIT 9515).